We begin with the raw amino-acid sequence, 122 residues long: U19-hexatoxin-Hi1a (122 aa).

Residues 1–18 (MNTMIGFIVLLVSATVLG) form the signal peptide. Residues 19 to 80 (DPELDALRKE…YENSNFREKR (62 aa)) constitute a propeptide that is removed on maturation. 3 disulfides stabilise this stretch: Cys81–Cys96, Cys88–Cys101, and Cys95–Cys116.

As to expression, expressed by the venom gland.

Its subcellular location is the secreted. In terms of biological role, probable ion channel inhibitor. The sequence is that of U19-hexatoxin-Hi1a from Hadronyche infensa (Fraser island funnel-web spider).